A 319-amino-acid chain; its full sequence is Guanosine ABC transporter permease protein NupQ (319 aa).

9 helical membrane-spanning segments follow: residues 6–26 (ILSIIVPATLVYAAPLILTAL), 39–59 (IGLEGLMIIGAFTSVLFNLFF), 65–85 (AAAPWLSLLAAMAAGALFSLI), 99–119 (VSGVAINMLALGATLFIVKLI), 159–179 (ILAIALAFISWFILFKTPFGL), 204–224 (IGVMISGLFGGLGGGVYASTI), 235–255 (GQGFIALAALVFGKWHPIGAL), 257–277 (AALFFGFAQSLSIIGSLLPLF), and 282–302 (NVYMLMAPYILTILALTGFIG).

The protein belongs to the binding-protein-dependent transport system permease family. In terms of assembly, the complex is composed of two ATP-binding proteins (NupO), two transmembrane proteins (NupP and NupQ) and a solute-binding protein (NupN).

The protein localises to the cell membrane. Its function is as follows. Part of an ABC transporter complex involved in the uptake of guanosine. Responsible for the translocation of the substrate across the membrane. May be a nucleoside transporter of broad specificity but with various affinities for different substrates. The sequence is that of Guanosine ABC transporter permease protein NupQ from Bacillus subtilis (strain 168).